Here is a 47-residue protein sequence, read N- to C-terminus: Sperm protamine P1 (47 aa).

The protein belongs to the protamine P1 family. As to expression, testis.

The protein resides in the nucleus. The protein localises to the chromosome. Protamines substitute for histones in the chromatin of sperm during the haploid phase of spermatogenesis. They compact sperm DNA into a highly condensed, stable and inactive complex. The sequence is that of Sperm protamine P1 (PRM1) from Galeopterus variegatus (Malayan flying lemur).